A 284-amino-acid polypeptide reads, in one-letter code: Hydrogenase expression/formation protein HupQ (284 aa).

The tract at residues 1–23 (MIGTQSILPPGFGPGSHGEEDRL) is disordered.

This sequence belongs to the HupH/HyaF family.

This chain is Hydrogenase expression/formation protein HupQ (hupQ), found in Azotobacter chroococcum mcd 1.